A 248-amino-acid chain; its full sequence is 1-(5-phosphoribosyl)-5-[(5-phosphoribosylamino)methylideneamino] imidazole-4-carboxamide isomerase (248 aa).

Residue aspartate 8 is the Proton acceptor of the active site. Catalysis depends on aspartate 129, which acts as the Proton donor.

Belongs to the HisA/HisF family.

Its subcellular location is the cytoplasm. It carries out the reaction 1-(5-phospho-beta-D-ribosyl)-5-[(5-phospho-beta-D-ribosylamino)methylideneamino]imidazole-4-carboxamide = 5-[(5-phospho-1-deoxy-D-ribulos-1-ylimino)methylamino]-1-(5-phospho-beta-D-ribosyl)imidazole-4-carboxamide. It participates in amino-acid biosynthesis; L-histidine biosynthesis; L-histidine from 5-phospho-alpha-D-ribose 1-diphosphate: step 4/9. The sequence is that of 1-(5-phosphoribosyl)-5-[(5-phosphoribosylamino)methylideneamino] imidazole-4-carboxamide isomerase from Rhizobium etli (strain CIAT 652).